A 197-amino-acid polypeptide reads, in one-letter code: Imidazoleglycerol-phosphate dehydratase (197 aa).

It belongs to the imidazoleglycerol-phosphate dehydratase family.

The protein resides in the cytoplasm. It catalyses the reaction D-erythro-1-(imidazol-4-yl)glycerol 3-phosphate = 3-(imidazol-4-yl)-2-oxopropyl phosphate + H2O. The protein operates within amino-acid biosynthesis; L-histidine biosynthesis; L-histidine from 5-phospho-alpha-D-ribose 1-diphosphate: step 6/9. This chain is Imidazoleglycerol-phosphate dehydratase, found in Clostridium acetobutylicum (strain ATCC 824 / DSM 792 / JCM 1419 / IAM 19013 / LMG 5710 / NBRC 13948 / NRRL B-527 / VKM B-1787 / 2291 / W).